The primary structure comprises 109 residues: Large ribosomal subunit protein uL22 (109 aa).

This sequence belongs to the universal ribosomal protein uL22 family. Part of the 50S ribosomal subunit.

Its function is as follows. This protein binds specifically to 23S rRNA; its binding is stimulated by other ribosomal proteins, e.g. L4, L17, and L20. It is important during the early stages of 50S assembly. It makes multiple contacts with different domains of the 23S rRNA in the assembled 50S subunit and ribosome. The globular domain of the protein is located near the polypeptide exit tunnel on the outside of the subunit, while an extended beta-hairpin is found that lines the wall of the exit tunnel in the center of the 70S ribosome. The polypeptide is Large ribosomal subunit protein uL22 (Blochmanniella pennsylvanica (strain BPEN)).